A 487-amino-acid polypeptide reads, in one-letter code: Protein nucleotidyltransferase YdiU (487 aa).

Positions 90, 92, 93, 113, 125, 126, 176, and 183 each coordinate ATP. Asp-252 acts as the Proton acceptor in catalysis. Asn-253 and Asp-262 together coordinate Mg(2+). Asp-262 is a binding site for ATP.

The protein belongs to the SELO family. The cofactor is Mg(2+). It depends on Mn(2+) as a cofactor.

It catalyses the reaction L-seryl-[protein] + ATP = 3-O-(5'-adenylyl)-L-seryl-[protein] + diphosphate. The catalysed reaction is L-threonyl-[protein] + ATP = 3-O-(5'-adenylyl)-L-threonyl-[protein] + diphosphate. The enzyme catalyses L-tyrosyl-[protein] + ATP = O-(5'-adenylyl)-L-tyrosyl-[protein] + diphosphate. It carries out the reaction L-histidyl-[protein] + UTP = N(tele)-(5'-uridylyl)-L-histidyl-[protein] + diphosphate. It catalyses the reaction L-seryl-[protein] + UTP = O-(5'-uridylyl)-L-seryl-[protein] + diphosphate. The catalysed reaction is L-tyrosyl-[protein] + UTP = O-(5'-uridylyl)-L-tyrosyl-[protein] + diphosphate. In terms of biological role, nucleotidyltransferase involved in the post-translational modification of proteins. It can catalyze the addition of adenosine monophosphate (AMP) or uridine monophosphate (UMP) to a protein, resulting in modifications known as AMPylation and UMPylation. The sequence is that of Protein nucleotidyltransferase YdiU from Pseudomonas fluorescens (strain SBW25).